Consider the following 479-residue polypeptide: tRNA-dihydrouridine(20) synthase [NAD(P)+] (479 aa).

Residues proline 14–valine 16 and glutamine 87 each bind FMN. The Proton donor role is filled by cysteine 116. Residues lysine 159, histidine 187, asparagine 221–aspartate 223, and alanine 245–arginine 246 contribute to the FMN site.

Belongs to the Dus family. Dus2 subfamily. FMN serves as cofactor.

The protein resides in the cytoplasm. The protein localises to the nucleus. It carries out the reaction 5,6-dihydrouridine(20) in tRNA + NADP(+) = uridine(20) in tRNA + NADPH + H(+). It catalyses the reaction 5,6-dihydrouridine(20) in tRNA + NAD(+) = uridine(20) in tRNA + NADH + H(+). The enzyme catalyses a 5,6-dihydrouridine in mRNA + NAD(+) = a uridine in mRNA + NADH + H(+). The catalysed reaction is a 5,6-dihydrouridine in mRNA + NADP(+) = a uridine in mRNA + NADPH + H(+). Catalyzes the NADPH-dependent synthesis of dihydrouridine, a modified base found in the D-loop of most tRNAs. Specifically modifies U20 in cytoplasmic tRNAs. Also able to mediate dihydrouridylation of some mRNAs, thereby affecting their translation. The chain is tRNA-dihydrouridine(20) synthase [NAD(P)+] from Schizosaccharomyces pombe (strain 972 / ATCC 24843) (Fission yeast).